The sequence spans 423 residues: Peroxisomal membrane protein PMP47A (423 aa).

Solcar repeat units lie at residues 6-120, 142-230, and 239-373; these read YDDL…TGKT, LSVW…LKSF, and ITPV…LLIL. The chain crosses the membrane as a helical span at residues 12–32; it reads AFAGAGGGLLSMTLTYPLVTL. A compositionally biased stretch (basic and acidic residues) spans 43–53; that stretch reads KKDQEKEKENS. Positions 43 to 70 are disordered; the sequence is KKDQEKEKENSNEDGSLSPKSSNTSDVS. Positions 55 to 70 are enriched in polar residues; sequence EDGSLSPKSSNTSDVS. Transmembrane regions (helical) follow at residues 98 to 118, 148 to 168, 204 to 224, and 245 to 265; these read SALF…ELTG, MAAG…IWVA, FTGI…YTIF, and LLLG…YITL. Positions 278 to 308 are disordered; the sequence is SEDVEKERTDSVQSLPEDGSDEDNLKENSAK. The helical transmembrane segment at 353 to 373 threads the bilayer; it reads LLQSILNAAFLFYFKEELLIL.

Belongs to the mitochondrial carrier (TC 2.A.29) family.

The protein localises to the peroxisome membrane. Its function is as follows. May have transport activity. The chain is Peroxisomal membrane protein PMP47A (PMP47A) from Candida boidinii (Yeast).